The chain runs to 225 residues: Small ribosomal subunit protein uS2 (225 aa).

Residues 1–14 are compositionally biased toward basic and acidic residues; it reads MAEAKPAPEKEAAA. Residues 1–33 are disordered; that stretch reads MAEAKPAPEKEAAAKTESVPVETEGEGPSVKEG.

It belongs to the universal ribosomal protein uS2 family.

This Methanosarcina barkeri (strain Fusaro / DSM 804) protein is Small ribosomal subunit protein uS2.